The sequence spans 253 residues: Pre-mRNA-splicing factor SPF27 homolog (253 aa).

The stretch at 124–235 forms a coiled coil; sequence KQYLQKNQRS…IDSFKKEAAE (112 aa).

The protein belongs to the SPF27 family. In terms of assembly, component of the multiprotein assembly MOS4-associated complex (MAC) at least composed of MOS4, CDC5 and PRL1. Interacts with CYCL1-1 and CDC5. Associated with the spliceosome. Interacts with ENY2.

The protein resides in the nucleus. In terms of biological role, component of the MAC complex that probably regulates defense responses through transcriptional control and thereby is essential for plant innate immunity. Involved in mRNA splicing. The sequence is that of Pre-mRNA-splicing factor SPF27 homolog (MOS4) from Arabidopsis thaliana (Mouse-ear cress).